The sequence spans 543 residues: Biotinidase (543 aa).

The first 41 residues, 1–41, serve as a signal peptide directing secretion; it reads MAHAHIQGGRRAKSRFVVCIMSGARSKLALFLCGCYVVALG. Positions 72–351 constitute a CN hydrolase domain; that stretch reads NPLALISRQE…VGLIGAENAT (280 aa). Catalysis depends on Glu112, which acts as the Proton acceptor. Asn119 carries an N-linked (GlcNAc...) asparagine glycan. N-linked (GlcNAc...) (complex) asparagine glycosylation occurs at Asn150. N-linked (GlcNAc...) asparagine glycosylation is present at Asn203. The active-site Proton donor is Lys212. The Nucleophile role is filled by Cys245. N-linked (GlcNAc...) asparagine glycosylation is found at Asn349, Asn402, and Asn489.

This sequence belongs to the carbon-nitrogen hydrolase superfamily. BTD/VNN family.

It localises to the secreted. Its subcellular location is the extracellular space. The enzyme catalyses biocytin + H2O = biotin + L-lysine. The catalysed reaction is biotin amide + H2O = biotin + NH4(+). Catalytic release of biotin from biocytin, the product of biotin-dependent carboxylases degradation. The sequence is that of Biotinidase from Homo sapiens (Human).